The following is a 461-amino-acid chain: 3-oxoacyl-[acyl-carrier-protein] synthase, mitochondrial (461 aa).

A mitochondrion-targeting transit peptide spans 1–28 (MATSNLRRHLSASRLRLNRFISTSSSYH). A Ketosynthase family 3 (KS3) domain is found at 30-460 (HRRVVVTGLG…GTNASLLFAS (431 aa)). Residues cysteine 209, histidine 350, and histidine 389 each act as for beta-ketoacyl synthase activity in the active site.

Belongs to the thiolase-like superfamily. Beta-ketoacyl-ACP synthases family. In terms of assembly, homodimer. In terms of tissue distribution, expressed at the same level in leaves, roots, siliques and flowers.

Its subcellular location is the mitochondrion. It carries out the reaction a fatty acyl-[ACP] + malonyl-[ACP] + H(+) = a 3-oxoacyl-[ACP] + holo-[ACP] + CO2. The catalysed reaction is butanoyl-[ACP] + malonyl-[ACP] + H(+) = 3-oxohexanoyl-[ACP] + holo-[ACP] + CO2. It catalyses the reaction hexanoyl-[ACP] + malonyl-[ACP] + H(+) = 3-oxooctanoyl-[ACP] + holo-[ACP] + CO2. The enzyme catalyses octanoyl-[ACP] + malonyl-[ACP] + H(+) = 3-oxodecanoyl-[ACP] + holo-[ACP] + CO2. It carries out the reaction decanoyl-[ACP] + malonyl-[ACP] + H(+) = 3-oxododecanoyl-[ACP] + holo-[ACP] + CO2. The catalysed reaction is dodecanoyl-[ACP] + malonyl-[ACP] + H(+) = 3-oxotetradecanoyl-[ACP] + holo-[ACP] + CO2. It catalyses the reaction tetradecanoyl-[ACP] + malonyl-[ACP] + H(+) = 3-oxohexadecanoyl-[ACP] + holo-[ACP] + CO2. The enzyme catalyses hexadecanoyl-[ACP] + malonyl-[ACP] + H(+) = 3-oxooctadecanoyl-[ACP] + holo-[ACP] + CO2. The protein operates within lipid metabolism; fatty acid biosynthesis. With respect to regulation, inhibited by cerulenin. Functionally, catalyzes all the condensation reaction of fatty acid synthesis by the addition to an acyl acceptor of two carbons from malonyl-ACP. Able to elongate saturated acyl chains from 4 to at least 16 carbons. Uses malonyl-CoA but not acetyl-CoA as primer substrate. When expressed in a heterologous system, reveals a bimodal distribution of products, with peaks at C8 and C14-C16. The major product of the reaction (octanoyl-ACP) is required for the lipoylation of essential mitochondrial proteins. Required for mitochondrial fatty acid synthesis (mtFAS). MtFAS are essential for photorespiration and plant development, probably by influencing mitochondrial membrane lipid composition and other lipid metabolic pathways. The chain is 3-oxoacyl-[acyl-carrier-protein] synthase, mitochondrial from Arabidopsis thaliana (Mouse-ear cress).